Here is a 638-residue protein sequence, read N- to C-terminus: Sodium- and chloride-dependent neutral and basic amino acid transporter B(0+) (638 aa).

Topologically, residues 1 to 44 (MDRLKCPNFFKCRQKEKVTASSENFHVGENDENQERGNWSKKSD) are cytoplasmic. Helical transmembrane passes span 45 to 65 (YLLS…FPYL), 72 to 92 (GAFL…LFFL), and 110 to 130 (ILPL…FVAI). At 131–230 (YYNVIIAYSL…RSSGMDETGV (100 aa)) the chain is on the extracellular side. N-linked (GlcNAc...) asparagine glycosylation is found at Asn155, Asn163, Asn174, Asn185, Asn193, and Asn198. The next 2 helical transmembrane spans lie at 231-251 (VVWY…AALF) and 257-277 (SGKV…ILLI). The N-linked (GlcNAc...) asparagine glycan is linked to Asn298. Helical transmembrane passes span 311–331 (AATQ…ALSS), 344–364 (IIVC…IFSI), 395–415 (LAQL…LLTL), 453–473 (ILFL…VHLI), 476–496 (FCAG…IIWI), 524–544 (CWFV…LVKF), and 559–579 (VALG…MAII). Topologically, residues 580–638 (KIVQAEGNILQRIISCCRPASNWGPYLEKHRGERYRDMAEPAKETDHEIPTISGSTKPE) are cytoplasmic. The segment covering 618–628 (AEPAKETDHEI) has biased composition (basic and acidic residues). The disordered stretch occupies residues 618 to 638 (AEPAKETDHEIPTISGSTKPE).

The protein belongs to the sodium:neurotransmitter symporter (SNF) (TC 2.A.22) family. SLC6A14 subfamily. Expressed in the distal region of the intestinal tract: cecum and colon.

Its subcellular location is the membrane. It localises to the apical cell membrane. The catalysed reaction is glycine(out) + chloride(out) + 2 Na(+)(out) = glycine(in) + chloride(in) + 2 Na(+)(in). The enzyme catalyses L-leucine(out) + chloride(out) + 2 Na(+)(out) = L-leucine(in) + chloride(in) + 2 Na(+)(in). It carries out the reaction L-glutamine(out) + chloride(out) + 2 Na(+)(out) = L-glutamine(in) + chloride(in) + 2 Na(+)(in). It catalyses the reaction L-arginine(out) + chloride(out) + 2 Na(+)(out) = L-arginine(in) + chloride(in) + 2 Na(+)(in). The catalysed reaction is (R)-carnitine(out) + chloride(out) + 2 Na(+)(out) = (R)-carnitine(in) + chloride(in) + 2 Na(+)(in). The enzyme catalyses O-propanoyl-(R)-carnitine(out) + chloride(out) + 2 Na(+)(out) = O-propanoyl-(R)-carnitine(in) + chloride(in) + 2 Na(+)(in). It carries out the reaction L-isoleucine(out) + chloride(out) + 2 Na(+)(out) = L-isoleucine(in) + chloride(in) + 2 Na(+)(in). It catalyses the reaction L-methionine(out) + chloride(out) + 2 Na(+)(out) = L-methionine(in) + chloride(in) + 2 Na(+)(in). The catalysed reaction is L-valine(out) + chloride(out) + 2 Na(+)(out) = L-valine(in) + chloride(in) + 2 Na(+)(in). The enzyme catalyses L-alanine(out) + chloride(out) + 2 Na(+)(out) = L-alanine(in) + chloride(in) + 2 Na(+)(in). It carries out the reaction L-serine(out) + chloride(out) + 2 Na(+)(out) = L-serine(in) + chloride(in) + 2 Na(+)(in). It catalyses the reaction L-cysteine(out) + chloride(out) + 2 Na(+)(out) = L-cysteine(in) + chloride(in) + 2 Na(+)(in). The catalysed reaction is L-asparagine(out) + chloride(out) + 2 Na(+)(out) = L-asparagine(in) + chloride(in) + 2 Na(+)(in). The enzyme catalyses L-threonine(out) + chloride(out) + 2 Na(+)(out) = L-threonine(in) + chloride(in) + 2 Na(+)(in). It carries out the reaction L-phenylalanine(out) + chloride(out) + 2 Na(+)(out) = L-phenylalanine(in) + chloride(in) + 2 Na(+)(in). It catalyses the reaction L-tryptophan(out) + chloride(out) + 2 Na(+)(out) = L-tryptophan(in) + chloride(in) + 2 Na(+)(in). The catalysed reaction is L-tyrosine(out) + chloride(out) + 2 Na(+)(out) = L-tyrosine(in) + chloride(in) + 2 Na(+)(in). The enzyme catalyses L-histidine(out) + chloride(out) + 2 Na(+)(out) = L-histidine(in) + chloride(in) + 2 Na(+)(in). It carries out the reaction L-lysine(out) + chloride(out) + 2 Na(+)(out) = L-lysine(in) + chloride(in) + 2 Na(+)(in). It catalyses the reaction O-butanoyl-(R)-carnitine(out) + chloride(out) + 2 Na(+)(out) = O-butanoyl-(R)-carnitine(in) + chloride(in) + 2 Na(+)(in). In terms of biological role, amino acid transporter that plays an important role in the absorption of amino acids in the intestinal tract. Mediates the uptake of a broad range of neutral and cationic amino acids (with the exception of proline) in a Na(+)/Cl(-)-dependent manner. Transports non-alpha-amino acids such as beta-alanine with low affinity, and has a higher affinity for dipolar and cationic amino acids such as leucine and lysine. Can also transport carnitine, butyrylcarnitine and propionylcarnitine coupled to the transmembrane gradients of Na(+) and Cl(-). In Mus musculus (Mouse), this protein is Sodium- and chloride-dependent neutral and basic amino acid transporter B(0+).